A 519-amino-acid chain; its full sequence is Major facilitator superfamily domain-containing protein 8 (519 aa).

The tract at residues 1 to 25 (MANLGSEAEREPLLGPGSPGSREWS) is disordered. The Cytoplasmic segment spans residues 1–41 (MANLGSEAEREPLLGPGSPGSREWSEIETQEHYKSRWKSVR). The Dileucine internalization motif motif lies at 13 to 14 (LL). The helical transmembrane segment at 42-62 (ILYLTMFLSSVGFSIVIMSIW) threads the bilayer. At 63–75 (PYLQKIDQTADAS) the chain is on the extracellular side. Residues 76 to 96 (FLGWVIASYSLGQMVASPLFG) traverse the membrane as a helical segment. Residues 97 to 106 (LWSNYRPRKE) are Cytoplasmic-facing. A helical transmembrane segment spans residues 107-127 (PLIVSISISVAANCLYAYVHV). Over 128 to 140 (PAAHNKYYMLIAR) the chain is Extracellular. Residues 141 to 161 (GLVGFGAGNVAVVRSYIAGAT) form a helical membrane-spanning segment. Topologically, residues 162–174 (SLQERTNAMANTS) are cytoplasmic. The chain crosses the membrane as a helical span at residues 175 to 195 (TCQALGFILGPVFQTCFALIG). At 196 to 212 (EKGVTWDIIKLQVNMYT) the chain is on the extracellular side. The helical transmembrane segment at 213–233 (APVLLAAFLGILNIILILFIL) threads the bilayer. The Cytoplasmic segment spans residues 234 to 267 (REHRVDDLGRQCKSVNFQEENTDEPQIPEGSIDQ). Residues 268 to 288 (VAVVATNIVFFVVLFIFAVYE) traverse the membrane as a helical segment. At 289 to 310 (TILTPLTLDMYAWTQEQAVLYD) the chain is on the extracellular side. A helical membrane pass occupies residues 311-331 (GILLVAFGVEAVLVFMGVKLL). The Cytoplasmic portion of the chain corresponds to 332–338 (SKKIGER). A helical transmembrane segment spans residues 339–359 (AILLGGFVVVWVGFFILLPWG). The Extracellular portion of the chain corresponds to 360–416 (NQFPKIQWEDLHNSSTPNTTFGEIIIGLWNSSREDHSEQPTGCPIEQTWCLYTPVIH). Asn-372 and Asn-377 each carry an N-linked (GlcNAc...) asparagine glycan. The helical transmembrane segment at 417–439 (LAQFLTAAVLIGTGYPACSVMSY) threads the bilayer. At 440–452 (TLYSKVLGPKPQG) the chain is on the cytoplasmic side. The helical transmembrane segment at 453–473 (IYMGWLTTSGSAARILGPVFI) threads the bilayer. Residues 474–483 (SHVYTYLGPR) lie on the Extracellular side of the membrane. The helical transmembrane segment at 484–504 (WAFSLVCGIVVLTILLIGAVY) threads the bilayer. Residues 505 to 519 (KRLVAFSVRYMRIQE) are Cytoplasmic-facing.

This sequence belongs to the major facilitator superfamily.

The protein resides in the endosome membrane. Its subcellular location is the lysosome membrane. The enzyme catalyses chloride(in) = chloride(out). It catalyses the reaction iodide(out) = iodide(in). The catalysed reaction is fluoride(in) = fluoride(out). Functionally, outward-rectifying chloride channel involved in endolysosomal chloride homeostasis, membrane fusion and function. Conducts chloride currents up to hundreds of picoamperes. Regulates lysosomal calcium content by reducing the lysosomal membrane potential, thereby activating TRPML1 channel and further release of lysosomal calcium ions. Regulates the pH in endolysosomal compartments and may contribute to progressive acidification from endosome to lysosome. Permeable to other halides such as iodide and fluoride ions. The polypeptide is Major facilitator superfamily domain-containing protein 8 (Mus musculus (Mouse)).